A 119-amino-acid polypeptide reads, in one-letter code: Holo-[acyl-carrier-protein] synthase (119 aa).

2 residues coordinate Mg(2+): aspartate 8 and glutamate 58.

Belongs to the P-Pant transferase superfamily. AcpS family. The cofactor is Mg(2+).

It is found in the cytoplasm. It catalyses the reaction apo-[ACP] + CoA = holo-[ACP] + adenosine 3',5'-bisphosphate + H(+). Transfers the 4'-phosphopantetheine moiety from coenzyme A to a Ser of acyl-carrier-protein. The chain is Holo-[acyl-carrier-protein] synthase from Bacillus cereus (strain B4264).